A 143-amino-acid chain; its full sequence is Large ribosomal subunit protein uL13 (143 aa).

This sequence belongs to the universal ribosomal protein uL13 family. Part of the 50S ribosomal subunit.

In terms of biological role, this protein is one of the early assembly proteins of the 50S ribosomal subunit, although it is not seen to bind rRNA by itself. It is important during the early stages of 50S assembly. The sequence is that of Large ribosomal subunit protein uL13 from Variovorax paradoxus (strain S110).